Consider the following 71-residue polypeptide: MNMKTVKCPTCGKPVPWTPESRYRPFCSERCKQIDLGAWAAEQYTIPVVEDDDLPPDAPGGESGGASGRLN.

Zn(2+)-binding residues include C8, C11, C27, and C31. The segment at 48–71 (VVEDDDLPPDAPGGESGGASGRLN) is disordered. The segment covering 61 to 71 (GESGGASGRLN) has biased composition (gly residues).

Belongs to the DNA gyrase inhibitor YacG family. Interacts with GyrB. Requires Zn(2+) as cofactor.

In terms of biological role, inhibits all the catalytic activities of DNA gyrase by preventing its interaction with DNA. Acts by binding directly to the C-terminal domain of GyrB, which probably disrupts DNA binding by the gyrase. This is DNA gyrase inhibitor YacG from Ralstonia nicotianae (strain ATCC BAA-1114 / GMI1000) (Ralstonia solanacearum).